Here is a 370-residue protein sequence, read N- to C-terminus: DNA replication and repair protein RecF (370 aa).

Gly-30–Thr-37 serves as a coordination point for ATP.

This sequence belongs to the RecF family.

It localises to the cytoplasm. The RecF protein is involved in DNA metabolism; it is required for DNA replication and normal SOS inducibility. RecF binds preferentially to single-stranded, linear DNA. It also seems to bind ATP. The protein is DNA replication and repair protein RecF of Bacteroides fragilis (strain ATCC 25285 / DSM 2151 / CCUG 4856 / JCM 11019 / LMG 10263 / NCTC 9343 / Onslow / VPI 2553 / EN-2).